Consider the following 399-residue polypeptide: MSFDREEDQKLKFKTSKKLKVSSTFESMNLKDDLLRGIYSYGFEAPSSIQSRAITQIISGKDVIAQAQSGTGKTATFTIGLLQAIDLRKKDLQALILSPTRELASQIGQVVKNLGDYMNVNAFAITGGKTLKDDLKKMQKHGCQAVSGTPGRVLDMIKKQMLQTRNVQMLVLDEADELLSETLGFKQQIYDIFAKLPKNCQVVVVSATMNKDILEVTRKFMNDPVKILVKRDEISLEGIKQYVVNVDKEEWKFDTLCDIYDSLTITQCVIFCNTKKKVDWLSQRLIQSNFAVVSMHGDMKQEERDKVMNDFRTGHSRVLISTDVWARGIDVQQVSLVINYDLPEIIENYIHRIGRSGRFGRKGVAINFITKADLAKLREIEKFYSIKINPMPANFAELS.

The short motif at 23–51 is the Q motif element; that stretch reads STFESMNLKDDLLRGIYSYGFEAPSSIQS. The region spanning 54–227 is the Helicase ATP-binding domain; it reads ITQIISGKDV…RKFMNDPVKI (174 aa). 67 to 74 is a binding site for ATP; that stretch reads AQSGTGKT. Residues 173–176 carry the DEAD box motif; sequence DEAD. A Helicase C-terminal domain is found at 238 to 399; sequence GIKQYVVNVD…PMPANFAELS (162 aa).

It belongs to the DEAD box helicase family. DDX48/FAL1 subfamily.

The protein localises to the nucleus. It localises to the nucleolus. It catalyses the reaction ATP + H2O = ADP + phosphate + H(+). Its function is as follows. ATP-dependent RNA helicase involved in 40S ribosomal subunit biogenesis. Required for the processing and cleavage of 35S pre-rRNA at sites A0, A1, and A2, leading to mature 18S rRNA. The chain is ATP-dependent RNA helicase FAL1 (FAL1) from Saccharomyces cerevisiae (strain YJM789) (Baker's yeast).